The primary structure comprises 473 residues: GTPase Der (473 aa).

EngA-type G domains lie at 3–166 and 177–350; these read PVIA…ENPE and IRIG…ESAM. Residues 9 to 16, 56 to 60, 118 to 121, 183 to 190, 230 to 234, and 295 to 298 contribute to the GTP site; these read GRPNVGKS, DTGGL, NKTD, DTAGV, and NKWD. The KH-like domain maps to 351 to 435; that stretch reads SKWPTNRLTA…PIRFEFKSGE (85 aa). Residues 444–458 are compositionally biased toward basic and acidic residues; the sequence is RLTPRQKVKKDNDLK. The disordered stretch occupies residues 444 to 473; sequence RLTPRQKVKKDNDLKKGRRIKKTRQKSVKR. Basic residues predominate over residues 459–473; it reads KGRRIKKTRQKSVKR.

This sequence belongs to the TRAFAC class TrmE-Era-EngA-EngB-Septin-like GTPase superfamily. EngA (Der) GTPase family. In terms of assembly, associates with the 50S ribosomal subunit.

In terms of biological role, GTPase that plays an essential role in the late steps of ribosome biogenesis. The chain is GTPase Der from Marinobacter nauticus (strain ATCC 700491 / DSM 11845 / VT8) (Marinobacter aquaeolei).